Reading from the N-terminus, the 390-residue chain is GTP 3',8-cyclase, mitochondrial (390 aa).

A mitochondrion-targeting transit peptide spans 1–45 (MRRCFSKITDCHLGFKNSNFLLVGSEVGSGSVTRTITTTTSERLF). The 222-residue stretch at 69 to 290 (KFGRLHTYLR…PSIKRMQDHP (222 aa)) folds into the Radical SAM core domain. Residue Arg-78 participates in GTP binding. The [4Fe-4S] cluster site is built by Cys-85 and Cys-89. Tyr-91 is an S-adenosyl-L-methionine binding site. Cys-92 is a [4Fe-4S] cluster binding site. Position 128 (Arg-128) interacts with GTP. Gly-132 is an S-adenosyl-L-methionine binding site. Residue Thr-159 coordinates GTP. Ser-183 is an S-adenosyl-L-methionine binding site. Residue Lys-220 participates in GTP binding. Met-254 contacts S-adenosyl-L-methionine. [4Fe-4S] cluster-binding residues include Cys-317 and Cys-320. 322-324 (RLR) provides a ligand contact to GTP. [4Fe-4S] cluster is bound at residue Cys-334.

Belongs to the radical SAM superfamily. MoaA family. As to quaternary structure, homodimer. [4Fe-4S] cluster is required as a cofactor. Expressed in all organs, with an abundant expression in the roots.

It is found in the mitochondrion matrix. It carries out the reaction GTP + AH2 + S-adenosyl-L-methionine = (8S)-3',8-cyclo-7,8-dihydroguanosine 5'-triphosphate + 5'-deoxyadenosine + L-methionine + A + H(+). It participates in cofactor biosynthesis; molybdopterin biosynthesis. In terms of biological role, catalyzes the cyclization of GTP to (8S)-3',8-cyclo-7,8-dihydroguanosine 5'-triphosphate. The chain is GTP 3',8-cyclase, mitochondrial (CNX2) from Arabidopsis thaliana (Mouse-ear cress).